Consider the following 272-residue polypeptide: D-aminoacyl-tRNA deacylase (272 aa).

Belongs to the DtdA deacylase family. In terms of assembly, monomer. Zn(2+) is required as a cofactor.

It catalyses the reaction a D-aminoacyl-tRNA + H2O = a tRNA + a D-alpha-amino acid + H(+). It carries out the reaction glycyl-tRNA(Ala) + H2O = tRNA(Ala) + glycine + H(+). Its function is as follows. D-aminoacyl-tRNA deacylase with broad substrate specificity. By recycling D-aminoacyl-tRNA to D-amino acids and free tRNA molecules, this enzyme counteracts the toxicity associated with the formation of D-aminoacyl-tRNA entities in vivo. The polypeptide is D-aminoacyl-tRNA deacylase (Thermococcus onnurineus (strain NA1)).